A 202-amino-acid polypeptide reads, in one-letter code: Imidazoleglycerol-phosphate dehydratase (202 aa).

The protein belongs to the imidazoleglycerol-phosphate dehydratase family.

It is found in the cytoplasm. The enzyme catalyses D-erythro-1-(imidazol-4-yl)glycerol 3-phosphate = 3-(imidazol-4-yl)-2-oxopropyl phosphate + H2O. The protein operates within amino-acid biosynthesis; L-histidine biosynthesis; L-histidine from 5-phospho-alpha-D-ribose 1-diphosphate: step 6/9. The chain is Imidazoleglycerol-phosphate dehydratase from Sinorhizobium medicae (strain WSM419) (Ensifer medicae).